The chain runs to 71 residues: R-phycoerythrin gamma-1 chain, chloroplastic (71 aa).

Phycourobilin contacts are provided by C25 and C34. (2R,3E)-phycoerythrobilin is bound at residue C49. C58 contacts phycourobilin.

In terms of assembly, heteromer of 6 alpha, 6 beta and 1 gamma chains. In terms of processing, contains four covalently linked bilin chromophores.

Its subcellular location is the plastid. It localises to the chloroplast thylakoid membrane. Critical for the incorporation of phycoerythrin in the phycobilisome complex. The protein is R-phycoerythrin gamma-1 chain, chloroplastic of Gastroclonium coulteri (Red alga).